A 276-amino-acid polypeptide reads, in one-letter code: Pantothenate synthetase (276 aa).

27-34 serves as a coordination point for ATP; the sequence is MGALHRGH. The active-site Proton donor is the His34. Gln58 contributes to the (R)-pantoate binding site. Gln58 is a binding site for beta-alanine. 147–150 is a binding site for ATP; that stretch reads GKKD. A (R)-pantoate-binding site is contributed by Gln153. ATP-binding positions include Val176 and 184 to 187; that span reads LSSR.

The protein belongs to the pantothenate synthetase family. Homodimer.

It localises to the cytoplasm. The catalysed reaction is (R)-pantoate + beta-alanine + ATP = (R)-pantothenate + AMP + diphosphate + H(+). It functions in the pathway cofactor biosynthesis; (R)-pantothenate biosynthesis; (R)-pantothenate from (R)-pantoate and beta-alanine: step 1/1. Functionally, catalyzes the condensation of pantoate with beta-alanine in an ATP-dependent reaction via a pantoyl-adenylate intermediate. This is Pantothenate synthetase from Helicobacter pylori (strain G27).